The following is a 158-amino-acid chain: CD-NTase/cGAS isopeptidase (158 aa).

Catalysis depends on Glu38, which acts as the Proton donor/acceptor. The Zn(2+) site is built by His100, His102, and Asp113.

Belongs to the peptidase M67B family. Cap3 isopeptidase subfamily.

Functionally, metalloprotease priming reversal component of a CBASS antivirus system. CBASS (cyclic oligonucleotide-based antiphage signaling system) provides immunity against bacteriophages. The CD-NTase protein synthesizes cyclic nucleotides in response to infection; these serve as specific second messenger signals. The signals activate a diverse range of effectors, leading to bacterial cell death and thus abortive phage infection. A type II-A(GA) CBASS system. Its function is as follows. Reverses the primed state of CdnA, the CD-NTase. In terms of biological role, the capV-cdnA-cap2-cap3 operon provides about 10(4)-fold protection in strain BWHPSA011 against infection by phage PaMx41. In P.aeruginosa strain PAO1 it confers protection against phages PaMx41 and JBD18 but not JBD67 (JBD18 and JBD67 do not replicate in BWHPSA011 / Pa011). When acb2 in JBD67 is deleted this CBASS operon then protects against JDB67 also. This CBASS system limits prophage induction of lysogenized JBD67 as well as viral lytic replication. The protein is CD-NTase/cGAS isopeptidase of Pseudomonas aeruginosa (strain BWHPSA011 / Pa011).